Reading from the N-terminus, the 281-residue chain is NADH-quinone oxidoreductase subunit B (281 aa).

4 residues coordinate [4Fe-4S] cluster: Cys37, Cys38, Cys103, and Cys132. Positions 242–281 (DAKPLDESRAHGPGPTTADIADAADTADSDAAPGATHDTP) are disordered. The span at 257 to 281 (TTADIADAADTADSDAAPGATHDTP) shows a compositional bias: low complexity.

This sequence belongs to the complex I 20 kDa subunit family. In terms of assembly, NDH-1 is composed of 14 different subunits. Subunits NuoB, C, D, E, F, and G constitute the peripheral sector of the complex. Requires [4Fe-4S] cluster as cofactor.

Its subcellular location is the cell membrane. The enzyme catalyses a quinone + NADH + 5 H(+)(in) = a quinol + NAD(+) + 4 H(+)(out). In terms of biological role, NDH-1 shuttles electrons from NADH, via FMN and iron-sulfur (Fe-S) centers, to quinones in the respiratory chain. The immediate electron acceptor for the enzyme in this species is believed to be a menaquinone. Couples the redox reaction to proton translocation (for every two electrons transferred, four hydrogen ions are translocated across the cytoplasmic membrane), and thus conserves the redox energy in a proton gradient. The sequence is that of NADH-quinone oxidoreductase subunit B from Frankia alni (strain DSM 45986 / CECT 9034 / ACN14a).